The primary structure comprises 181 residues: ATP synthase subunit delta (181 aa).

This sequence belongs to the ATPase delta chain family. As to quaternary structure, F-type ATPases have 2 components, F(1) - the catalytic core - and F(0) - the membrane proton channel. F(1) has five subunits: alpha(3), beta(3), gamma(1), delta(1), epsilon(1). F(0) has three main subunits: a(1), b(2) and c(10-14). The alpha and beta chains form an alternating ring which encloses part of the gamma chain. F(1) is attached to F(0) by a central stalk formed by the gamma and epsilon chains, while a peripheral stalk is formed by the delta and b chains.

It is found in the cell membrane. F(1)F(0) ATP synthase produces ATP from ADP in the presence of a proton or sodium gradient. F-type ATPases consist of two structural domains, F(1) containing the extramembraneous catalytic core and F(0) containing the membrane proton channel, linked together by a central stalk and a peripheral stalk. During catalysis, ATP synthesis in the catalytic domain of F(1) is coupled via a rotary mechanism of the central stalk subunits to proton translocation. In terms of biological role, this protein is part of the stalk that links CF(0) to CF(1). It either transmits conformational changes from CF(0) to CF(1) or is implicated in proton conduction. The protein is ATP synthase subunit delta of Clostridioides difficile (strain 630) (Peptoclostridium difficile).